Consider the following 132-residue polypeptide: ATP synthase epsilon chain (132 aa).

This sequence belongs to the ATPase epsilon chain family. In terms of assembly, F-type ATPases have 2 components, CF(1) - the catalytic core - and CF(0) - the membrane proton channel. CF(1) has five subunits: alpha(3), beta(3), gamma(1), delta(1), epsilon(1). CF(0) has three main subunits: a, b and c.

It is found in the cell inner membrane. In terms of biological role, produces ATP from ADP in the presence of a proton gradient across the membrane. This Anaeromyxobacter sp. (strain K) protein is ATP synthase epsilon chain.